The primary structure comprises 249 residues: MDQAKKYANLLDSFRSSTEDILLLERLEVSDKPIYVLDSSFNPPHFAHLGMCLSIPKGSQLLLLLSITNADKPVAPAAFNERILMMEKLKTLIHNCTVSVAICKHALFVDKCRSISNKLGPREQVYLVGFDTLIRILDCKYYKEKAMQQVLQPFFSCSQILCFSREVDGTTTDDQAQYLEKIKKSLLPNIPSQWSEKIKLTKLKGNVGFGVSSTRARQAIISGDEETQRKIIPQEILNVIKVIQPYRHR.

NAD(+) is bound by residues Ser40 and Phe41. An ATP-binding site is contributed by His48. NAD(+) contacts are provided by Thr97, Gly129, Asp131, Arg165, and Asn206. 214-217 (TRAR) lines the ATP pocket.

Belongs to the eukaryotic NMN adenylyltransferase family. POF1 subfamily.

It is found in the cytoplasm. The protein localises to the nucleus. The catalysed reaction is beta-nicotinamide D-ribonucleotide + ATP + H(+) = diphosphate + NAD(+). The protein operates within cofactor biosynthesis; NAD(+) biosynthesis; NAD(+) from nicotinamide D-ribonucleotide: step 1/1. Its function is as follows. Catalyzes the formation of NAD(+) from nicotinamide mononucleotide (NMN) and ATP. Involved in the salvage pathway for NAD(+) biosynthesis via NMN. This chain is Putative nicotinamide mononucleotide adenylyltransferase, found in Schizosaccharomyces pombe (strain 972 / ATCC 24843) (Fission yeast).